A 614-amino-acid chain; its full sequence is tRNA uridine 5-carboxymethylaminomethyl modification enzyme MnmG (614 aa).

Residue 10 to 15 (GAGHAG) participates in FAD binding. 271-285 (GPRYCPSIEDKIVKF) contacts NAD(+).

The protein belongs to the MnmG family. As to quaternary structure, homodimer. Heterotetramer of two MnmE and two MnmG subunits. FAD serves as cofactor.

It localises to the cytoplasm. Its function is as follows. NAD-binding protein involved in the addition of a carboxymethylaminomethyl (cmnm) group at the wobble position (U34) of certain tRNAs, forming tRNA-cmnm(5)s(2)U34. In Ureaplasma parvum serovar 3 (strain ATCC 27815 / 27 / NCTC 11736), this protein is tRNA uridine 5-carboxymethylaminomethyl modification enzyme MnmG.